Consider the following 764-residue polypeptide: 5-methyltetrahydropteroyltriglutamate--homocysteine methyltransferase (764 aa).

5-methyltetrahydropteroyltri-L-glutamate-binding positions include 16–19 (RELK) and lysine 117. L-homocysteine is bound by residues 442–444 (IGS) and glutamate 495. L-methionine contacts are provided by residues 442–444 (IGS) and glutamate 495. Residues 526–527 (RC) and tryptophan 572 each bind 5-methyltetrahydropteroyltri-L-glutamate. Aspartate 610 provides a ligand contact to L-homocysteine. Aspartate 610 is an L-methionine binding site. Glutamate 616 serves as a coordination point for 5-methyltetrahydropteroyltri-L-glutamate. 3 residues coordinate Zn(2+): histidine 652, cysteine 654, and glutamate 676. The Proton donor role is filled by histidine 705. Cysteine 737 serves as a coordination point for Zn(2+).

The protein belongs to the vitamin-B12 independent methionine synthase family. It depends on Zn(2+) as a cofactor.

It catalyses the reaction 5-methyltetrahydropteroyltri-L-glutamate + L-homocysteine = tetrahydropteroyltri-L-glutamate + L-methionine. The protein operates within amino-acid biosynthesis; L-methionine biosynthesis via de novo pathway; L-methionine from L-homocysteine (MetE route): step 1/1. Catalyzes the transfer of a methyl group from 5-methyltetrahydrofolate to homocysteine resulting in methionine formation. The chain is 5-methyltetrahydropteroyltriglutamate--homocysteine methyltransferase from Bordetella pertussis (strain Tohama I / ATCC BAA-589 / NCTC 13251).